A 244-amino-acid polypeptide reads, in one-letter code: Protein-lysine methyltransferase METTL21E (244 aa).

Residues 1–20 (MDLTVTHITHKETYKEPRDD) form a disordered region. Positions 9 to 18 (THKETYKEPR) are enriched in basic and acidic residues. S-adenosyl-L-methionine-binding positions include W69, 97–99 (GAG), D118, W149, and A170.

The protein belongs to the methyltransferase superfamily. METTL21 family.

In terms of biological role, protein-lysine methyltransferase. The chain is Protein-lysine methyltransferase METTL21E (Mettl21e) from Mus musculus (Mouse).